A 333-amino-acid polypeptide reads, in one-letter code: Glycerol-3-phosphate dehydrogenase [NAD(P)+] (333 aa).

3 residues coordinate NADPH: S10, W11, and K105. Sn-glycerol 3-phosphate is bound by residues K105, G136, and T138. An NADPH-binding site is contributed by A140. K191, D244, S254, R255, and N256 together coordinate sn-glycerol 3-phosphate. The active-site Proton acceptor is K191. R255 serves as a coordination point for NADPH. Residues V279 and E281 each contribute to the NADPH site.

The protein belongs to the NAD-dependent glycerol-3-phosphate dehydrogenase family.

It is found in the cytoplasm. It carries out the reaction sn-glycerol 3-phosphate + NAD(+) = dihydroxyacetone phosphate + NADH + H(+). The catalysed reaction is sn-glycerol 3-phosphate + NADP(+) = dihydroxyacetone phosphate + NADPH + H(+). Its pathway is membrane lipid metabolism; glycerophospholipid metabolism. Functionally, catalyzes the reduction of the glycolytic intermediate dihydroxyacetone phosphate (DHAP) to sn-glycerol 3-phosphate (G3P), the key precursor for phospholipid synthesis. The polypeptide is Glycerol-3-phosphate dehydrogenase [NAD(P)+] (Trichlorobacter lovleyi (strain ATCC BAA-1151 / DSM 17278 / SZ) (Geobacter lovleyi)).